The primary structure comprises 1031 residues: Translation initiation factor IF-2 (1031 aa).

Disordered regions lie at residues 33–369 (KSHS…GDVL) and 388–436 (LKPL…AESL). Residues 45–56 (ELVRSKLSEPRV) are compositionally biased toward basic and acidic residues. Over residues 96–105 (PAPAQQQAAA) the composition is skewed to low complexity. A compositionally biased stretch (polar residues) spans 108–123 (ASSSKPSPQRPDQLSS). Positions 148 to 171 (PAAQEPQPAAASTRPEAAAKAGSP) are enriched in low complexity. Pro residues predominate over residues 184–200 (VLPPPRRAASGPEPPQR). Residues 250-281 (TRPEPRSPVAKKEESSDSGKADEAPRPQRRLE) are compositionally biased toward basic and acidic residues. Positions 286–299 (PTRPVAKPLPPEPD) are enriched in pro residues. A compositionally biased stretch (low complexity) spans 419 to 435 (RPSASAEATAPEAAAES). Positions 522–695 (PRPPVVTIMG…LLVADVAELQ (174 aa)) constitute a tr-type G domain. Residues 531–538 (GHVDHGKT) are G1. Position 531–538 (531–538 (GHVDHGKT)) interacts with GTP. The segment at 556–560 (GITQR) is G2. The tract at residues 581–584 (DTPG) is G3. GTP-binding positions include 581-585 (DTPGH) and 635-638 (NKID). Positions 635-638 (NKID) are G4. Residues 671 to 673 (SAL) form a G5 region.

It belongs to the TRAFAC class translation factor GTPase superfamily. Classic translation factor GTPase family. IF-2 subfamily.

It localises to the cytoplasm. One of the essential components for the initiation of protein synthesis. Protects formylmethionyl-tRNA from spontaneous hydrolysis and promotes its binding to the 30S ribosomal subunits. Also involved in the hydrolysis of GTP during the formation of the 70S ribosomal complex. In Synechococcus sp. (strain JA-3-3Ab) (Cyanobacteria bacterium Yellowstone A-Prime), this protein is Translation initiation factor IF-2.